Here is a 245-residue protein sequence, read N- to C-terminus: tRNA pseudouridine synthase A (245 aa).

Aspartate 52 functions as the Nucleophile in the catalytic mechanism. Tyrosine 111 is a binding site for substrate.

Belongs to the tRNA pseudouridine synthase TruA family. In terms of assembly, homodimer.

The catalysed reaction is uridine(38/39/40) in tRNA = pseudouridine(38/39/40) in tRNA. In terms of biological role, formation of pseudouridine at positions 38, 39 and 40 in the anticodon stem and loop of transfer RNAs. The polypeptide is tRNA pseudouridine synthase A (Thermotoga petrophila (strain ATCC BAA-488 / DSM 13995 / JCM 10881 / RKU-1)).